We begin with the raw amino-acid sequence, 1099 residues long: Transmembrane protein 132D (1099 aa).

Positions 1-30 are cleaved as a signal peptide; that stretch reads MCPSEMGTLWHHWSPVLISLAALFSKVTEG. Over 31–915 the chain is Extracellular; the sequence is RGILESIQRF…LMQASKGLSD (885 aa). N-linked (GlcNAc...) asparagine glycosylation occurs at N505. The interval 797 to 858 is disordered; the sequence is FGQNDANPNT…LMEGRGTTTD (62 aa). The span at 835–848 shows a compositional bias: low complexity; the sequence is GSQEGQYYGSSSMG. A helical transmembrane segment spans residues 916-936; sequence LEIGMYALLGVFCLAILVFLI. Residues 937-1099 lie on the Cytoplasmic side of the membrane; sequence NCVTFALKYR…NYMERLHENV (163 aa).

This sequence belongs to the TMEM132 family. In terms of assembly, interacts (via C-terminus) with NCKAP. Expressed in mature oligodendrocytes. Detected in the brain, lung, pancreas and testis. Highly expressed in mature neurons of the adult nervous system.

The protein localises to the membrane. In terms of biological role, regulate neuronals morphology via inhibition of the WAVE regulatory complex (WCR), a complex that controls F-actin cytoskeletal dynamics. This Homo sapiens (Human) protein is Transmembrane protein 132D.